Reading from the N-terminus, the 97-residue chain is Large ribosomal subunit protein uL23 (97 aa).

This sequence belongs to the universal ribosomal protein uL23 family. In terms of assembly, part of the 50S ribosomal subunit. Contacts protein L29, and trigger factor when it is bound to the ribosome.

Functionally, one of the early assembly proteins it binds 23S rRNA. One of the proteins that surrounds the polypeptide exit tunnel on the outside of the ribosome. Forms the main docking site for trigger factor binding to the ribosome. In Chelativorans sp. (strain BNC1), this protein is Large ribosomal subunit protein uL23.